The primary structure comprises 483 residues: tRNA (guanine(37)-N(1))-methyltransferase (483 aa).

The interval 1–24 (MEEAATLQSLSISSSSPFPNNSSP) is disordered. A compositionally biased stretch (low complexity) spans 9–24 (SLSISSSSPFPNNSSP). S-adenosyl-L-methionine-binding positions include H252, 290–291 (DL), and N379.

It belongs to the class I-like SAM-binding methyltransferase superfamily. TRM5/TYW2 family. In terms of assembly, monomer.

Its subcellular location is the mitochondrion matrix. The protein localises to the nucleus. The protein resides in the cytoplasm. The enzyme catalyses guanosine(37) in tRNA + S-adenosyl-L-methionine = N(1)-methylguanosine(37) in tRNA + S-adenosyl-L-homocysteine + H(+). Its function is as follows. Specifically methylates the N1 position of guanosine-37 in various cytoplasmic and mitochondrial tRNAs. Methylation is not dependent on the nature of the nucleoside 5' of the target nucleoside. This is the first step in the biosynthesis of wybutosine (yW), a modified base adjacent to the anticodon of tRNAs and required for accurate decoding. This chain is tRNA (guanine(37)-N(1))-methyltransferase, found in Ajellomyces capsulatus (strain G186AR / H82 / ATCC MYA-2454 / RMSCC 2432) (Darling's disease fungus).